Reading from the N-terminus, the 1217-residue chain is ATP-dependent helicase/nuclease subunit A (1217 aa).

The UvrD-like helicase ATP-binding domain maps to valine 10–arginine 475. Alanine 31–threonine 38 contributes to the ATP binding site. The 311-residue stretch at lysine 476 to glycine 786 folds into the UvrD-like helicase C-terminal domain.

It belongs to the helicase family. AddA subfamily. Heterodimer of AddA and AddB/RexB. Mg(2+) is required as a cofactor.

It carries out the reaction Couples ATP hydrolysis with the unwinding of duplex DNA by translocating in the 3'-5' direction.. The catalysed reaction is ATP + H2O = ADP + phosphate + H(+). In terms of biological role, the heterodimer acts as both an ATP-dependent DNA helicase and an ATP-dependent, dual-direction single-stranded exonuclease. Recognizes the chi site generating a DNA molecule suitable for the initiation of homologous recombination. The AddA nuclease domain is required for chi fragment generation; this subunit has the helicase and 3' -&gt; 5' nuclease activities. In Staphylococcus aureus (strain MRSA252), this protein is ATP-dependent helicase/nuclease subunit A.